The sequence spans 79 residues: Small ribosomal subunit protein bS18 (79 aa).

The protein belongs to the bacterial ribosomal protein bS18 family. In terms of assembly, part of the 30S ribosomal subunit. Forms a tight heterodimer with protein bS6.

Functionally, binds as a heterodimer with protein bS6 to the central domain of the 16S rRNA, where it helps stabilize the platform of the 30S subunit. In Salinispora arenicola (strain CNS-205), this protein is Small ribosomal subunit protein bS18.